The primary structure comprises 139 residues: ATP synthase epsilon chain (139 aa).

The protein belongs to the ATPase epsilon chain family. As to quaternary structure, F-type ATPases have 2 components, CF(1) - the catalytic core - and CF(0) - the membrane proton channel. CF(1) has five subunits: alpha(3), beta(3), gamma(1), delta(1), epsilon(1). CF(0) has three main subunits: a, b and c.

The protein resides in the cell membrane. Functionally, produces ATP from ADP in the presence of a proton gradient across the membrane. The polypeptide is ATP synthase epsilon chain (Ligilactobacillus salivarius (strain UCC118) (Lactobacillus salivarius)).